The primary structure comprises 370 residues: Sensor protein GtcS (370 aa).

The next 2 membrane-spanning stretches (helical) occupy residues 2-22 and 40-60; these read ITAYILFTVTVGVTNSIVFYL and AWIVAWRLMEMVIFALSVYLY. One can recognise an HAMP domain in the interval 66 to 118; it reads KRITGPLEKITDAIQKMREGEFAQRLCFKADYELTLIQEHFNEMVAHLEKTEA. One can recognise a Histidine kinase domain in the interval 133-355; the sequence is DLSHDFKTPI…RLENDLPYRL (223 aa).

Its subcellular location is the cell membrane. It catalyses the reaction ATP + protein L-histidine = ADP + protein N-phospho-L-histidine.. Member of the two-component regulatory system GtcS/GtcR which may act in the control of the transcription of the grs operon which encodes the multienzymes involved in the biosynthesis of the peptide antibiotic gramicidin S. Probably activates GtcR by phosphorylation. In Aneurinibacillus migulanus (Bacillus migulanus), this protein is Sensor protein GtcS (gtcS).